The primary structure comprises 57 residues: UPF0391 membrane protein RPC_3278 (57 aa).

A run of 2 helical transmembrane segments spans residues 4–24 (WVITFLVVALIAGILGFGGIA) and 30–50 (IAKIIFFIAVVLFLVSAVVGL).

The protein belongs to the UPF0391 family.

The protein resides in the cell membrane. The sequence is that of UPF0391 membrane protein RPC_3278 from Rhodopseudomonas palustris (strain BisB18).